The primary structure comprises 217 residues: Probable transaldolase (217 aa).

The active-site Schiff-base intermediate with substrate is the lysine 84.

The protein belongs to the transaldolase family. Type 3B subfamily.

Its subcellular location is the cytoplasm. It carries out the reaction D-sedoheptulose 7-phosphate + D-glyceraldehyde 3-phosphate = D-erythrose 4-phosphate + beta-D-fructose 6-phosphate. Its pathway is carbohydrate degradation; pentose phosphate pathway; D-glyceraldehyde 3-phosphate and beta-D-fructose 6-phosphate from D-ribose 5-phosphate and D-xylulose 5-phosphate (non-oxidative stage): step 2/3. Functionally, transaldolase is important for the balance of metabolites in the pentose-phosphate pathway. The chain is Probable transaldolase from Roseiflexus sp. (strain RS-1).